A 505-amino-acid chain; its full sequence is Activin receptor type-1B (505 aa).

Positions 1–23 are cleaved as a signal peptide; sequence MAESAGASSFFPLVVLLLAGSGG. The Extracellular portion of the chain corresponds to 24–126; that stretch reads SGPRGIQALL…AHPSMWGPVE (103 aa). Asparagine 43 carries an N-linked (GlcNAc...) asparagine glycan. The chain crosses the membrane as a helical span at residues 127–149; sequence LVGIIAGPVFLLFLIIIIVFLVI. Over 150 to 505 the chain is Cytoplasmic; it reads NYHQRVYHNR…QLSVQEDVKI (356 aa). The region spanning 177–206 is the GS domain; sequence KTLQDLVYDLSTSGSGSGLPLFVQRTVART. One can recognise a Protein kinase domain in the interval 207-497; the sequence is IVLQEIIGKG…LRIKKTLSQL (291 aa). ATP contacts are provided by residues 213-221 and lysine 234; that span reads IGKGRFGEV. Catalysis depends on aspartate 335, which acts as the Proton acceptor. The residue at position 380 (tyrosine 380) is a Phosphotyrosine.

Belongs to the protein kinase superfamily. TKL Ser/Thr protein kinase family. TGFB receptor subfamily. In terms of assembly, forms an activin receptor complex with activin receptor type-2 (ACVR2A or ACVR2B). Part of a complex consisting of MAGI2/ARIP1, ACVR2A, ACVR1B and SMAD3. Interacts with SMAD2 and SMAD3. Interacts with SMAD7. Interacts with FKBP1A. Interacts with IGSF1. Interacts with CRIPTO. Interacts with TDP2. Interacts with TSC22D1/TSC-22. In terms of processing, autophosphorylated. Phosphorylated by activin receptor type-2 (ACVR2A or ACVR2B) in response to activin-binding at serine and threonine residues in the GS domain. Phosphorylation of ACVR1B by activin receptor type-2 regulates association with SMAD7. Post-translationally, ubiquitinated. Level of ubiquitination is regulated by the SMAD7-SMURF1 complex. Ubiquitinated.

The protein localises to the cell membrane. It catalyses the reaction L-threonyl-[receptor-protein] + ATP = O-phospho-L-threonyl-[receptor-protein] + ADP + H(+). The catalysed reaction is L-seryl-[receptor-protein] + ATP = O-phospho-L-seryl-[receptor-protein] + ADP + H(+). With respect to regulation, activin receptor type-2 (ACVR2A or ACVR2B) activates the type-1 receptor through phosphorylation of its regulatory GS domain. Its function is as follows. Transmembrane serine/threonine kinase activin type-1 receptor forming an activin receptor complex with activin receptor type-2 (ACVR2A or ACVR2B). Transduces the activin signal from the cell surface to the cytoplasm and is thus regulating a many physiological and pathological processes including neuronal differentiation and neuronal survival, hair follicle development and cycling, FSH production by the pituitary gland, wound healing, extracellular matrix production, immunosuppression and carcinogenesis. Activin is also thought to have a paracrine or autocrine role in follicular development in the ovary. Within the receptor complex, type-2 receptors (ACVR2A and/or ACVR2B) act as a primary activin receptors whereas the type-1 receptors like ACVR1B act as downstream transducers of activin signals. Activin binds to type-2 receptor at the plasma membrane and activates its serine-threonine kinase. The activated receptor type-2 then phosphorylates and activates the type-1 receptor such as ACVR1B. Once activated, the type-1 receptor binds and phosphorylates the SMAD proteins SMAD2 and SMAD3, on serine residues of the C-terminal tail. Soon after their association with the activin receptor and subsequent phosphorylation, SMAD2 and SMAD3 are released into the cytoplasm where they interact with the common partner SMAD4. This SMAD complex translocates into the nucleus where it mediates activin-induced transcription. Inhibitory SMAD7, which is recruited to ACVR1B through FKBP1A, can prevent the association of SMAD2 and SMAD3 with the activin receptor complex, thereby blocking the activin signal. Activin signal transduction is also antagonized by the binding to the receptor of inhibin-B via the IGSF1 inhibin coreceptor. ACVR1B also phosphorylates TDP2. The protein is Activin receptor type-1B (Acvr1b) of Mus musculus (Mouse).